A 5054-amino-acid chain; its full sequence is Malformin synthetase mlfA (5054 aa).

Residues 194 to 585 (ERRAANRPHS…CGRADTQVKL (392 aa)) are adenylation 1. The Carrier 1 domain occupies 723-799 (LGLSQLEQEI…EASSLAEVQE (77 aa)). The residue at position 760 (Ser-760) is an O-(pantetheine 4'-phosphoryl)serine. The interval 837-1268 (EDVFPCTTMQ…ALNTLTLLQA (432 aa)) is condensation 1. An adenylation 2 region spans residues 1296–1685 (DRWVTRQPES…GRKDTQVKLR (390 aa)). Residues 1823–1900 (TASSKLELTL…QLAAILGEAT (78 aa)) form the Carrier 2 domain. Ser-1860 is subject to O-(pantetheine 4'-phosphoryl)serine. Disordered stretches follow at residues 1899-1929 (ATGQ…NDGV) and 1964-1994 (GSSS…VSPV). Composition is skewed to low complexity over residues 1904–1927 (ESSA…STND) and 1965–1981 (SSSC…SSSS). The segment at 2033–2448 (EDIYPATALQ…GVSYRDKQTL (416 aa)) is condensation 2. Positions 2471–2863 (VRTPHAPAVF…IGRRDGQLKL (393 aa)) are adenylation 3. The region spanning 2999–3075 (RPATAQEREM…QLMRHLSANG (77 aa)) is the Carrier 3 domain. At Ser-3036 the chain carries O-(pantetheine 4'-phosphoryl)serine. Condensation stretches follow at residues 3092–3557 (WVPL…TYDQ) and 3578–3997 (DIYP…EQLV). An adenylation 4 region spans residues 4022 to 4412 (HSSREAACAW…VGRKDNQIKF (391 aa)). One can recognise a Carrier 4 domain in the interval 4546-4622 (MPFTAAECKM…DLAYRTANLV (77 aa)). Ser-4583 carries the post-translational modification O-(pantetheine 4'-phosphoryl)serine. Residues 4659–4972 (EVLPTTSFQR…LQTIVQHQNN (314 aa)) form a condensation 5 region.

Belongs to the NRP synthetase family.

The protein operates within secondary metabolite biosynthesis. Nonribosomal peptide synthetase; part of the gene cluster that mediates the biosynthesis of malformins, cyclic pentapeptides with a disulfide bond between 2 consecutive cysteins, that show potential anti-tumor as well as antimalarial and antitrypanosomal properties. The nonribosomal peptide synthetase mlfA is responsible of the formation of the cyclic pentapeptide. The malformin biosynthesis clusters in malformin-producing fungi also contain enzymes involved in the formation of the disulfide bond between the two consecutive cysteins within malformins, in addition to additional tailoring enzymes such as methyltransferases or oxidoreductases. They are also composed of up to 4 major facilitator superfamily transporters, and transcription factors probably involved in the regulation of the expression of those clusters. The sequence is that of Malformin synthetase mlfA from Aspergillus niger (strain ATCC MYA-4892 / CBS 513.88 / FGSC A1513).